Reading from the N-terminus, the 547-residue chain is Membrane protein insertase YidC (547 aa).

Residues Leu-8–Phe-28 form a helical membrane-spanning segment. The segment covering Gln-37–Thr-50 has biased composition (low complexity). The tract at residues Gln-37–Thr-62 is disordered. The span at Ser-51–Thr-62 shows a compositional bias: polar residues. The next 5 membrane-spanning stretches (helical) occupy residues Val-325 to Leu-345, Phe-348 to Tyr-368, Gly-414 to Ile-434, Trp-449 to Met-469, and Leu-495 to Trp-515.

It belongs to the OXA1/ALB3/YidC family. Type 1 subfamily. In terms of assembly, interacts with the Sec translocase complex via SecD. Specifically interacts with transmembrane segments of nascent integral membrane proteins during membrane integration.

The protein localises to the cell inner membrane. In terms of biological role, required for the insertion and/or proper folding and/or complex formation of integral membrane proteins into the membrane. Involved in integration of membrane proteins that insert both dependently and independently of the Sec translocase complex, as well as at least some lipoproteins. Aids folding of multispanning membrane proteins. This Helicobacter pylori (strain ATCC 700392 / 26695) (Campylobacter pylori) protein is Membrane protein insertase YidC.